The primary structure comprises 283 residues: Pantothenate synthetase (283 aa).

Methionine 30–histidine 37 provides a ligand contact to ATP. Catalysis depends on histidine 37, which acts as the Proton donor. Glutamine 61 serves as a coordination point for (R)-pantoate. Position 61 (glutamine 61) interacts with beta-alanine. Residue glycine 149–aspartate 152 participates in ATP binding. Residue glutamine 155 participates in (R)-pantoate binding. Leucine 186 to arginine 189 lines the ATP pocket.

This sequence belongs to the pantothenate synthetase family. Homodimer.

The protein resides in the cytoplasm. It catalyses the reaction (R)-pantoate + beta-alanine + ATP = (R)-pantothenate + AMP + diphosphate + H(+). Its pathway is cofactor biosynthesis; (R)-pantothenate biosynthesis; (R)-pantothenate from (R)-pantoate and beta-alanine: step 1/1. Functionally, catalyzes the condensation of pantoate with beta-alanine in an ATP-dependent reaction via a pantoyl-adenylate intermediate. The polypeptide is Pantothenate synthetase (Escherichia coli O6:H1 (strain CFT073 / ATCC 700928 / UPEC)).